The primary structure comprises 561 residues: Protein NRT1/ PTR FAMILY 5.13 (561 aa).

A helical transmembrane segment spans residues Ala78–Leu98. The residue at position 103 (Thr103) is a Phosphothreonine. The next 10 membrane-spanning stretches (helical) occupy residues Ile104–Leu124, Ser133–Gly153, Phe183–Val203, Trp211–Leu231, Ile324–Phe344, Ile361–Tyr381, Ile405–Lys425, Ile447–Gly467, Ala486–Ile506, and Tyr530–Ser550.

The protein belongs to the major facilitator superfamily. Proton-dependent oligopeptide transporter (POT/PTR) (TC 2.A.17) family. Expressed in roots, flowers and siliques. Detected in stems and leaves.

It localises to the membrane. The sequence is that of Protein NRT1/ PTR FAMILY 5.13 (NPF5.13) from Arabidopsis thaliana (Mouse-ear cress).